We begin with the raw amino-acid sequence, 396 residues long: 1-deoxy-D-xylulose 5-phosphate reductoisomerase (396 aa).

5 residues coordinate NADPH: T13, G14, S15, V16, and N127. K128 provides a ligand contact to 1-deoxy-D-xylulose 5-phosphate. Position 129 (E129) interacts with NADPH. D153 is a binding site for Mn(2+). S154, E155, S184, and H207 together coordinate 1-deoxy-D-xylulose 5-phosphate. E155 lines the Mn(2+) pocket. Position 213 (G213) interacts with NADPH. Residues S220, N225, K226, and E229 each contribute to the 1-deoxy-D-xylulose 5-phosphate site. Mn(2+) is bound at residue E229.

Belongs to the DXR family. Requires Mg(2+) as cofactor. Mn(2+) serves as cofactor.

The enzyme catalyses 2-C-methyl-D-erythritol 4-phosphate + NADP(+) = 1-deoxy-D-xylulose 5-phosphate + NADPH + H(+). Its pathway is isoprenoid biosynthesis; isopentenyl diphosphate biosynthesis via DXP pathway; isopentenyl diphosphate from 1-deoxy-D-xylulose 5-phosphate: step 1/6. In terms of biological role, catalyzes the NADPH-dependent rearrangement and reduction of 1-deoxy-D-xylulose-5-phosphate (DXP) to 2-C-methyl-D-erythritol 4-phosphate (MEP). The polypeptide is 1-deoxy-D-xylulose 5-phosphate reductoisomerase (Pseudomonas fluorescens (strain SBW25)).